We begin with the raw amino-acid sequence, 330 residues long: D-alanine--D-alanine ligase (330 aa).

An ATP-grasp domain is found at 122–323; the sequence is NRFLSGFGIR…MKEVLCTIIR (202 aa). 151–206 provides a ligand contact to ATP; sequence TARMGLPLFVKPNVGGSSIATTKVVEAAQLLPAIGQAFSEGEEVMIERLICGTEVT. Residues aspartate 277, glutamate 290, and asparagine 292 each coordinate Mg(2+).

Belongs to the D-alanine--D-alanine ligase family. It depends on Mg(2+) as a cofactor. Mn(2+) serves as cofactor.

The protein resides in the cytoplasm. It catalyses the reaction 2 D-alanine + ATP = D-alanyl-D-alanine + ADP + phosphate + H(+). It participates in cell wall biogenesis; peptidoglycan biosynthesis. Cell wall formation. The sequence is that of D-alanine--D-alanine ligase from Porphyromonas gingivalis (strain ATCC 33277 / DSM 20709 / CIP 103683 / JCM 12257 / NCTC 11834 / 2561).